The following is an 87-amino-acid chain: Small ribosomal subunit protein bS18 (87 aa).

The protein belongs to the bacterial ribosomal protein bS18 family. As to quaternary structure, part of the 30S ribosomal subunit. Forms a tight heterodimer with protein bS6.

Functionally, binds as a heterodimer with protein bS6 to the central domain of the 16S rRNA, where it helps stabilize the platform of the 30S subunit. The chain is Small ribosomal subunit protein bS18 from Nitratidesulfovibrio vulgaris (strain ATCC 29579 / DSM 644 / CCUG 34227 / NCIMB 8303 / VKM B-1760 / Hildenborough) (Desulfovibrio vulgaris).